Here is a 295-residue protein sequence, read N- to C-terminus: 3-methyl-2-oxobutanoate hydroxymethyltransferase (295 aa).

The tract at residues 1–30 (MTSGRAMSPEETAPYGTGPARAESAPDAPA) is disordered. The Mg(2+) site is built by D76 and D115. Residues 76 to 77 (DS), D115, and K145 each bind 3-methyl-2-oxobutanoate. Residue E147 participates in Mg(2+) binding. E213 functions as the Proton acceptor in the catalytic mechanism.

Belongs to the PanB family. Homodecamer; pentamer of dimers. The cofactor is Mg(2+).

The protein localises to the cytoplasm. The catalysed reaction is 3-methyl-2-oxobutanoate + (6R)-5,10-methylene-5,6,7,8-tetrahydrofolate + H2O = 2-dehydropantoate + (6S)-5,6,7,8-tetrahydrofolate. It functions in the pathway cofactor biosynthesis; (R)-pantothenate biosynthesis; (R)-pantoate from 3-methyl-2-oxobutanoate: step 1/2. Functionally, catalyzes the reversible reaction in which hydroxymethyl group from 5,10-methylenetetrahydrofolate is transferred onto alpha-ketoisovalerate to form ketopantoate. The protein is 3-methyl-2-oxobutanoate hydroxymethyltransferase of Nocardioides sp. (strain ATCC BAA-499 / JS614).